A 180-amino-acid chain; its full sequence is Peroxisome assembly protein 22 (180 aa).

Residues 15 to 32 form a helical membrane-spanning segment; it reads LGIVGTAIAVLVTSYYIY.

This sequence belongs to the peroxin-22 family.

The protein resides in the peroxisome membrane. Its function is as follows. Involved in peroxisome biogenesis. This chain is Peroxisome assembly protein 22 (PEX22), found in Saccharomyces cerevisiae (strain ATCC 204508 / S288c) (Baker's yeast).